The sequence spans 210 residues: Protein GrpE (210 aa).

The disordered stretch occupies residues 191–210; sequence KGGPKPAEAETNSVFDEKDA.

It belongs to the GrpE family. In terms of assembly, homodimer.

Its subcellular location is the cytoplasm. In terms of biological role, participates actively in the response to hyperosmotic and heat shock by preventing the aggregation of stress-denatured proteins, in association with DnaK and GrpE. It is the nucleotide exchange factor for DnaK and may function as a thermosensor. Unfolded proteins bind initially to DnaJ; upon interaction with the DnaJ-bound protein, DnaK hydrolyzes its bound ATP, resulting in the formation of a stable complex. GrpE releases ADP from DnaK; ATP binding to DnaK triggers the release of the substrate protein, thus completing the reaction cycle. Several rounds of ATP-dependent interactions between DnaJ, DnaK and GrpE are required for fully efficient folding. This Rhizobium etli (strain CIAT 652) protein is Protein GrpE.